Consider the following 481-residue polypeptide: MKNAPVDTQSDAATSFEGTAANPQWGGRFASGPAAIMGEINASIGFDKILWRQDIRGSLAHAAMLQKVGLLTETELAEIRQGLGDIAQEIGEGRFEFSPALEDIHMNIEARLSERIGEAGKRLHTARSRNDQVATDFRLWVRDAIDGLQEQTASLMRSLATRALEHAATPMPGFTHLQVAQPVTFGHHLLAYVEMLSRDRGRLRDARARLNECPLGSAALAGTSFPIDRRMTAAALDFDRPTANSLDAVSDRDFALEFLSALSLQAMHLSRLAEEIVMWASAPFGFITLSDAFTTGSSIMPQKRNPDAAELVRAKIGRIMGDFVGLLTVMKGLPLAYAKDTQEDKEPVFDATEAMTLSLAAMDGMIRDLKANTTRMRAVAGMGFSTATDLADWLVRELRVPFRTAHHVTGRLVGMAEQKGCDLADLSLEEMQSVEPQINAGVFDVLTVEASLASRTSEGGTAPANVKHQAESWLAKLGETA.

Residues 1-17 (MKNAPVDTQSDAATSFE) show a composition bias toward polar residues. The tract at residues 1-25 (MKNAPVDTQSDAATSFEGTAANPQW) is disordered.

This sequence belongs to the lyase 1 family. Argininosuccinate lyase subfamily.

It is found in the cytoplasm. It catalyses the reaction 2-(N(omega)-L-arginino)succinate = fumarate + L-arginine. Its pathway is amino-acid biosynthesis; L-arginine biosynthesis; L-arginine from L-ornithine and carbamoyl phosphate: step 3/3. This is Argininosuccinate lyase from Gluconobacter oxydans (strain 621H) (Gluconobacter suboxydans).